Here is a 483-residue protein sequence, read N- to C-terminus: MSNKLLSPHPHSVVLRSEFKMASSPAVLRASRLYQWSLKSSAQFLGSPQLRQVGQIIRVPARMAATLILEPAGRCCWDEPVRIAVRGLAPEQPVTLRASLRDEKGALFQAHARYRADTLGELDLERAPALGGSFAGLEPMGLLWALEPEKPLVRLVKRDVRTPLAVELEVLDGHDPDPGRLLCQTRHERYFLPPGVRREPVRVGRVRGTLFLPPEPGPFPGIVDMFGTGGGLLEYRASLLAGKGFAVMALAYYNYEDLPKTMETLHLEYFEEAMNYLLSHPEVKGPGVGLLGISKGGELCLSMASFLKGITAAVVINGSVANVGGTLHYKGETLPPVGVNRNRIKVTKDGYADIVDVLNSPLEGPDQKSFIPVERAESTFLFLVGQDDHNWKSEFYANEACKRLQAHGRRKPQIICYPETGHYIEPPYFPLCRASLHALVGSPIIWGGEPRAHAMAQVDAWKQLQTFFHKHLGGHEGTIPSKV.

Lys104 bears the N6-acetyllysine mark. Catalysis depends on charge relay system residues Ser294, Asp388, and His422. Position 470 is an N6-succinyllysine (Lys470). A Microbody targeting signal motif is present at residues 481-483; sequence SKV.

The protein belongs to the C/M/P thioester hydrolase family. Monomer. As to expression, strongest expression in heart, liver, muscle and kidney. Weak in placenta and pancreas.

The protein resides in the mitochondrion. It catalyses the reaction hexadecanoyl-CoA + H2O = hexadecanoate + CoA + H(+). The catalysed reaction is tetradecanoyl-CoA + H2O = tetradecanoate + CoA + H(+). It carries out the reaction octadecanoyl-CoA + H2O = octadecanoate + CoA + H(+). The enzyme catalyses eicosanoyl-CoA + H2O = eicosanoate + CoA + H(+). It catalyses the reaction decanoyl-CoA + H2O = decanoate + CoA + H(+). The catalysed reaction is dodecanoyl-CoA + H2O = dodecanoate + CoA + H(+). It carries out the reaction (9Z)-octadecenoyl-CoA + H2O = (9Z)-octadecenoate + CoA + H(+). The enzyme catalyses (9Z)-hexadecenoyl-CoA + H2O = (9Z)-hexadecenoate + CoA + H(+). It catalyses the reaction (9E)-octadecenoyl-CoA + H2O = (9E)-octadecenoate + CoA + H(+). The catalysed reaction is (9Z,12Z)-octadecadienoyl-CoA + H2O = (9Z,12Z)-octadecadienoate + CoA + H(+). It functions in the pathway lipid metabolism; fatty acid metabolism. Functionally, catalyzes the hydrolysis of acyl-CoAs into free fatty acids and coenzyme A (CoASH), regulating their respective intracellular levels. Displays higher activity toward long chain acyl CoAs (C14-C20). The enzyme is involved in enhancing the hepatic fatty acid oxidation in mitochondria. The chain is Acyl-coenzyme A thioesterase 2, mitochondrial (ACOT2) from Homo sapiens (Human).